The following is a 140-amino-acid chain: Transmembrane protein 107 (140 aa).

2 consecutive transmembrane segments (helical) span residues L7 to W27 and L53 to S73. N-linked (GlcNAc...) asparagine glycosylation is present at N79. The next 2 helical transmembrane spans lie at S83–E103 and I113–F133.

Part of the tectonic-like complex (also named B9 complex). Interacts with TMEM237, TMEM231, MKS1 and TMEM216.

It localises to the membrane. The protein resides in the cell projection. The protein localises to the cilium. In terms of biological role, plays a role in cilia formation and embryonic patterning. Requires for normal Sonic hedgehog (Shh) signaling in the neural tube and acts in combination with GLI2 and GLI3 to pattern ventral and intermediate neuronal cell types. During ciliogenesis regulates the ciliary transition zone localization of some MKS complex proteins. The sequence is that of Transmembrane protein 107 from Homo sapiens (Human).